The primary structure comprises 161 residues: Allophycocyanin alpha chain (161 aa).

Residue Asn-71 is modified to N4-methylasparagine. Cys-81 lines the (2R,3E)-phycocyanobilin pocket.

Belongs to the phycobiliprotein family. In terms of assembly, component of the phycobilisome. Heterodimer of an alpha and a beta chain. Post-translationally, contains one covalently linked phycocyanobilin chromophore.

It localises to the cellular thylakoid membrane. Its function is as follows. Light-harvesting photosynthetic bile pigment-protein from the phycobiliprotein complex. Allophycocyanin has a maximum absorption at approximately 650 nanometers. The sequence is that of Allophycocyanin alpha chain (apcA) from Arthrospira platensis (Spirulina platensis).